The primary structure comprises 763 residues: MKLISLLFKQISVVILIDSISTLPSDTEKLCYNSVIVLKLSWSLTLHIQIFMEVWQYGKFQWNDPFFNNDMDDVFNQLFRRMDNQNSEVRGISLMDNRCHRMSLLNTEQLASYPKIIKQWKYLKMVNRLLKKEGFIEKLGTNLTEQARDGLLDPVIDRENEIQKPAQKFCRRRKKNPLLVGESGVGKTAVVEGLAQRIVAGKVPETIQDKEIYSIDLSSLEAGTQYRGSFEENIKQLVEEVKAAGNIILFIDEIHQILGTGALAGEEVKGLADIIKPLLCHVAKLSVIGATTQDEYRNTILKNAALARRFNDVVINEPTAADTLRILQGIKELYEKHHHVVLPDDEKKAAVDYSIKYIHNRHLPDKAIDLIDDCGSFSGKNSQTDVETLDQRLKNKRQLRRPAIKSEDFAKAADIKRVDRGTKQKIKKTHQKEKITATIDDVAQSVERLTGIPVSDMGANDIEHLKNLDKRLKVMVIGEDEAVKMVAKAIRRNRAGFSEGDQPKGSFLFVGPTGVGKTELSQALALDMFGNENALFGIDMSEYADRTAVSKLIGTSAGYVGYEDNANTLTERVRRNPYSVILLDEIEKADPQVLTLLLQVMDDGRLTDGQGSVIDFRNTIIIMTSNAGFGNEALSGDKQRVQSLMDKLAPFFAQNFRPEFRNRLDNIVEFSHLTKQDLSQIVDLMLADVQKTLAKKSIKLEVTKAAKDWLMEQGYDEAMGARPLRRVIEQQIRDKVTDFYLDHLDVKNLKADLVDAEIVISAA.

An i region spans residues 136 to 386 (IEKLGTNLTE…FSGKNSQTDV (251 aa)). Residues 181–188 (GESGVGKT) and 511–518 (GPTGVGKT) each bind ATP. The tract at residues 437-629 (ATIDDVAQSV…IIIMTSNAGF (193 aa)) is II.

This sequence belongs to the ClpA/ClpB family.

Its function is as follows. Could be the ATP-dependent specificity component of an ATP-dependent protease. In Lactococcus lactis subsp. lactis (Streptococcus lactis), this protein is ATP-dependent Clp protease ATP-binding subunit ClpL (clpL).